We begin with the raw amino-acid sequence, 453 residues long: MSETQQQVQNSTGSIRSPDKIEDTFRRMKVNEDNMEQSSPYPDRPGERDCQFFLRTGQCGYGNSCRYNHPLTNLPQGIIYYRDQLPERVGQPDCETGACKYGPTCKYHHPKDRNGAGPVLFNVLGLPMRQGEKPCPYYMQTGLCRFGVACKFHHPHPHSQPSNGHSAYAMSSFPSVGFPYASGMTMVSLPPATYGAIPRPQVPQSQAYMPYMVAPSQGLLPPQGWATYMTASNPIYNMKTQLDSSSSASVAVTVTSHHHSFSERAECRFFMNTGTCKYGDDCKYSHPKERLLQSPPTLLNPIVLPARPGQPACGNFKAYGFCKFGANCKFDHSMLLNPYNNTGLAMSSLPTPYPYAPPVSTNLRISSPPSPSDMTTLSNGKPAAAEAQSLETEKQDDSPTEPEKSEVEDSLPPNGSDSTSLPNDKPDAETEKQDDDSAELDSSKVQDSSDKST.

A compositionally biased stretch (polar residues) spans 1–15; that stretch reads MSETQQQVQNSTGSI. Residues 1–47 are disordered; that stretch reads MSETQQQVQNSTGSIRSPDKIEDTFRRMKVNEDNMEQSSPYPDRPGE. At Ser2 the chain carries N-acetylserine. Positions 17–32 are enriched in basic and acidic residues; sequence SPDKIEDTFRRMKVNE. 5 C3H1-type zinc fingers span residues 44-72, 95-112, 129-157, 261-289, and 307-335; these read RPGE…HPLT, ETGA…HPKD, RQGE…HPHP, FSER…HPKE, and RPGQ…HSML. The span at 360–379 shows a compositional bias: polar residues; that stretch reads STNLRISSPPSPSDMTTLSN. Residues 360-453 are disordered; the sequence is STNLRISSPP…KVQDSSDKST (94 aa). The segment covering 391–407 has biased composition (basic and acidic residues); it reads ETEKQDDSPTEPEKSEV. The segment covering 413-422 has biased composition (polar residues); that stretch reads PNGSDSTSLP. A compositionally biased stretch (basic and acidic residues) spans 441 to 453; that stretch reads DSSKVQDSSDKST.

It is found in the nucleus. In Arabidopsis thaliana (Mouse-ear cress), this protein is Zinc finger CCCH domain-containing protein 26 (ZFN2).